Consider the following 387-residue polypeptide: 8-amino-7-oxononanoate synthase (387 aa).

R19 contacts substrate. 106 to 107 (GY) serves as a coordination point for pyridoxal 5'-phosphate. Position 131 (H131) interacts with substrate. Pyridoxal 5'-phosphate-binding residues include S177, H205, and T234. N6-(pyridoxal phosphate)lysine is present on K237. Residue T351 participates in substrate binding.

This sequence belongs to the class-II pyridoxal-phosphate-dependent aminotransferase family. BioF subfamily. As to quaternary structure, homodimer. Pyridoxal 5'-phosphate is required as a cofactor.

The catalysed reaction is 6-carboxyhexanoyl-[ACP] + L-alanine + H(+) = (8S)-8-amino-7-oxononanoate + holo-[ACP] + CO2. It functions in the pathway cofactor biosynthesis; biotin biosynthesis. In terms of biological role, catalyzes the decarboxylative condensation of pimeloyl-[acyl-carrier protein] and L-alanine to produce 8-amino-7-oxononanoate (AON), [acyl-carrier protein], and carbon dioxide. The sequence is that of 8-amino-7-oxononanoate synthase from Methylococcus capsulatus (strain ATCC 33009 / NCIMB 11132 / Bath).